Reading from the N-terminus, the 399-residue chain is Enoyl-[acyl-carrier-protein] reductase [NADH] (399 aa).

Residues 48-53 (GASTGY), 74-75 (FE), 111-112 (DA), and 139-140 (LA) contribute to the NAD(+) site. Tyrosine 225 lines the substrate pocket. Tyrosine 235 serves as the catalytic Proton donor. NAD(+) is bound by residues lysine 244 and 274 to 276 (VVT).

This sequence belongs to the TER reductase family. Monomer.

It carries out the reaction a 2,3-saturated acyl-[ACP] + NAD(+) = a (2E)-enoyl-[ACP] + NADH + H(+). It participates in lipid metabolism; fatty acid biosynthesis. Involved in the final reduction of the elongation cycle of fatty acid synthesis (FAS II). Catalyzes the reduction of a carbon-carbon double bond in an enoyl moiety that is covalently linked to an acyl carrier protein (ACP). The protein is Enoyl-[acyl-carrier-protein] reductase [NADH] of Yersinia pseudotuberculosis serotype O:1b (strain IP 31758).